We begin with the raw amino-acid sequence, 93 residues long: Small ribosomal subunit protein uS19 (93 aa).

It belongs to the universal ribosomal protein uS19 family.

Its function is as follows. Protein S19 forms a complex with S13 that binds strongly to the 16S ribosomal RNA. The chain is Small ribosomal subunit protein uS19 from Paenarthrobacter aurescens (strain TC1).